The sequence spans 365 residues: Pre-small/secreted glycoprotein (365 aa).

An N-terminal signal peptide occupies residues 1 to 32; it reads MGASGILQLPRERFRKTSFFVWVIILFHKVFS. An N-linked (GlcNAc...) asparagine; by host glycan is attached at N40. Intrachain disulfides connect C108/C135 and C121/C147. N-linked (GlcNAc...) asparagine; by host glycosylation is found at N204, N228, N257, and N268.

This sequence belongs to the filoviruses glycoprotein family. In terms of assembly, homodimer; disulfide-linked. The homodimers are linked by two disulfide bonds in a parallel orientation. As to quaternary structure, monomer. Post-translationally, this precursor is processed into mature sGP and delta-peptide by host furin or furin-like proteases. The cleavage site corresponds to the furin optimal cleavage sequence [KR]-X-[KR]-R. N-glycosylated. In terms of processing, O-glycosylated.

Its subcellular location is the secreted. In terms of biological role, seems to possess an anti-inflammatory activity as it can reverse the barrier-decreasing effects of TNF alpha. Might therefore contribute to the lack of inflammatory reaction seen during infection in spite the of extensive necrosis and massive virus production. Does not seem to be involved in activation of primary macrophages. Does not seem to interact specifically with neutrophils. Functionally, viroporin that permeabilizes mammalian cell plasma membranes. It acts by altering permeation of ionic compounds and small molecules. This activity may lead to viral enterotoxic activity. The protein is Pre-small/secreted glycoprotein (GP) of Epomops franqueti (Franquet's epauletted fruit bat).